A 144-amino-acid chain; its full sequence is Hexon-interlacing protein (144 aa).

Positions 106 to 133 (LTVMLAKLETLTAQLEELSQKVEELADA) form a coiled coil.

This sequence belongs to the adenoviridae hexon-interlacing protein family. Homotrimer. Interacts with hexon protein; this interaction tethers the hexons together. Self-interacts with adjacent proteins. Interacts with kinesin light chain KLC1; this interaction leads to capsid disruption at the nuclear pore complex during virus entry into host cell.

It is found in the virion. It localises to the host nucleus. Its function is as follows. Structural component of the virion that acts as a cement protein on the capsid exterior and forms triskelion structures consisting of three molecules that stabilize three hexon trimers at the center of each icosahedral facet and fixes the peripentonal hexons. Dispensable for assembly. During virus entry, recruits the anterograde motor kinesin-1 to the capsid docked at the nuclear pore complex thereby subjecting the docked capsid to a pulling force. The resulting tension leads to capsid disruption, dispersion of capsid fragments toward cell periphery and eventually viral DNA entry into the host nucleus. This chain is Hexon-interlacing protein, found in Homo sapiens (Human).